The following is a 283-amino-acid chain: Lysozyme-like protein 7 (283 aa).

Residues 1-18 (MAHKSIVIFSVLAVLCHS) form the signal peptide. A Ch-type lysozyme domain is found at 53–273 (YAYALDIYVQ…AVEEDGKIYA (221 aa)).

This sequence belongs to the glycosyl hydrolase 25 family. Expressed in intestine. Expressed in rectal gland cells and head neurons.

Functionally, plays a role in resistance to Gram-positive bacteria B.thuringiensis and M.nematophilum and Gram-negative bacteria S.boydii or S.flexneri infection and to fungus C.neoformans infection. Plays a role in susceptibility to Gram-negative bacterium S.typhimurium infection. This is Lysozyme-like protein 7 from Caenorhabditis elegans.